The chain runs to 428 residues: Aspartate--tRNA(Asp) ligase (428 aa).

Glu-166 serves as a coordination point for L-aspartate. The aspartate stretch occupies residues 188–191; the sequence is QLYK. L-aspartate is bound at residue Arg-210. Residues 210 to 212, 218 to 220, and Glu-351 each bind ATP; these read RAE and RHL. Residues Glu-351 and Ser-354 each contribute to the Mg(2+) site. 2 residues coordinate L-aspartate: Ser-354 and Arg-358. 399-402 contacts ATP; the sequence is GLER.

This sequence belongs to the class-II aminoacyl-tRNA synthetase family. Type 2 subfamily. In terms of assembly, homodimer. Mg(2+) is required as a cofactor.

It is found in the cytoplasm. The enzyme catalyses tRNA(Asp) + L-aspartate + ATP = L-aspartyl-tRNA(Asp) + AMP + diphosphate. Its function is as follows. Catalyzes the attachment of L-aspartate to tRNA(Asp) in a two-step reaction: L-aspartate is first activated by ATP to form Asp-AMP and then transferred to the acceptor end of tRNA(Asp). This Thermoplasma volcanium (strain ATCC 51530 / DSM 4299 / JCM 9571 / NBRC 15438 / GSS1) protein is Aspartate--tRNA(Asp) ligase.